A 294-amino-acid polypeptide reads, in one-letter code: MSQTDASCTIAELPYRSVTDLVVLDFPRPEVALITLNRPGRMNSMALDLMKSLKQVLKRITYDHSVRVVVLTGAGRGFCSGADQKFTAPVPQVEGLTQPVRALRAMELLEEVILALRRLHQPVIAAINGPAIGGGLCLALAADVRVASTRAYFRAAGINNGLSASELGLSYLLPRAVGSSRAFEIMLSGRDVGAEEAEQIGLVSYRVSDDRLLDTCYSIAARMATFSRSGTELTKRALWGGLDAASLDKHMQSESLAQLFIALHTSNFEEAAAPCTEKRPTVLVDARGCATSPG.

It belongs to the enoyl-CoA hydratase/isomerase family.

It catalyses the reaction a (3S)-3-hydroxyacyl-CoA = a (2E)-enoyl-CoA + H2O. The enzyme catalyses a 4-saturated-(3S)-3-hydroxyacyl-CoA = a (3E)-enoyl-CoA + H2O. Functionally, could possibly oxidize fatty acids using specific components. This chain is Probable enoyl-CoA hydratase echA12 (echA12), found in Mycobacterium leprae (strain TN).